Consider the following 516-residue polypeptide: 2-isopropylmalate synthase (516 aa).

The region spanning 10–271 (IRIFDTTLRD…TTGIDTRELA (262 aa)) is the Pyruvate carboxyltransferase domain. Residues aspartate 19, histidine 205, histidine 207, and asparagine 241 each coordinate Mn(2+). Positions 396 to 516 (ELVSFRVEAG…REKASNRETP (121 aa)) are regulatory domain.

Belongs to the alpha-IPM synthase/homocitrate synthase family. LeuA type 1 subfamily. In terms of assembly, homodimer. The cofactor is Mn(2+).

Its subcellular location is the cytoplasm. It catalyses the reaction 3-methyl-2-oxobutanoate + acetyl-CoA + H2O = (2S)-2-isopropylmalate + CoA + H(+). The protein operates within amino-acid biosynthesis; L-leucine biosynthesis; L-leucine from 3-methyl-2-oxobutanoate: step 1/4. Functionally, catalyzes the condensation of the acetyl group of acetyl-CoA with 3-methyl-2-oxobutanoate (2-ketoisovalerate) to form 3-carboxy-3-hydroxy-4-methylpentanoate (2-isopropylmalate). The protein is 2-isopropylmalate synthase of Acidimicrobium ferrooxidans (strain DSM 10331 / JCM 15462 / NBRC 103882 / ICP).